The following is a 139-amino-acid chain: Large ribosomal subunit protein eL32 (139 aa).

This sequence belongs to the eukaryotic ribosomal protein eL32 family.

This is Large ribosomal subunit protein eL32 (RPL32) from Encephalitozoon cuniculi (strain GB-M1) (Microsporidian parasite).